Here is a 312-residue protein sequence, read N- to C-terminus: Chitin deacetylase 2 (312 aa).

An N-terminal signal peptide occupies residues 1-44; sequence MRIQLNTIDLQCIIALSCLGQFVHAEANREDLKQIDFQFPVLER. A disulfide bond links Cys117 and Cys300. Residues 118 to 307 form the NodB homology domain; it reads SKLSQTFDDG…SHCVGGIDYI (190 aa). Catalysis depends on Asp125, which acts as the Proton acceptor. Residue Asp125 participates in acetate binding. Asp126 is a Co(2+) binding site. N-linked (GlcNAc...) asparagine glycosylation occurs at Asn142. 2 residues coordinate Co(2+): His172 and His176. N-linked (GlcNAc...) asparagine glycans are attached at residues Asn181 and Asn199. An acetate-binding site is contributed by Tyr213. Residues Asn246 and Asn263 are each glycosylated (N-linked (GlcNAc...) asparagine). The Proton donor role is filled by His273.

This sequence belongs to the polysaccharide deacetylase family. Monomer. Co(2+) serves as cofactor. Post-translationally, N-glycosylated.

The protein resides in the prospore. It catalyses the reaction [(1-&gt;4)-N-acetyl-beta-D-glucosaminyl](n) + n H2O = chitosan + n acetate. Its function is as follows. Hydrolyzes the N-acetamido groups of N-acetyl-D-glucosamine residues in chitin to form chitosan and acetate. Chitosan is a component of the spore wall. The protein is Chitin deacetylase 2 of Saccharomyces cerevisiae (strain ATCC 204508 / S288c) (Baker's yeast).